The chain runs to 473 residues: Cysteine--tRNA ligase (473 aa).

Cysteine 33 is a Zn(2+) binding site. The 'HIGH' region motif lies at 35 to 45; the sequence is ATVQGQPHIGH. The Zn(2+) site is built by cysteine 211, histidine 236, and glutamate 240. The short motif at 267–271 is the 'KMSKS' region element; sequence KMSKS. Lysine 270 is an ATP binding site.

This sequence belongs to the class-I aminoacyl-tRNA synthetase family. As to quaternary structure, monomer. It depends on Zn(2+) as a cofactor.

Its subcellular location is the cytoplasm. The enzyme catalyses tRNA(Cys) + L-cysteine + ATP = L-cysteinyl-tRNA(Cys) + AMP + diphosphate. The protein is Cysteine--tRNA ligase of Mycobacterium leprae (strain Br4923).